The primary structure comprises 81 residues: Conotoxin ArMKLT2-01 (81 aa).

The N-terminal stretch at 1 to 19 is a signal peptide; sequence MKLTCVIIVVALFLTACHA. The propeptide occupies 20–43; it reads KDKQEHPAVRGSDDMQDSEDLKLA. 3 cysteine pairs are disulfide-bonded: cysteine 46–cysteine 61, cysteine 53–cysteine 65, and cysteine 60–cysteine 74.

This sequence belongs to the conotoxin O1 superfamily. As to expression, expressed by the venom duct.

The protein localises to the secreted. The polypeptide is Conotoxin ArMKLT2-01 (Conus arenatus (Sand-dusted cone)).